Consider the following 173-residue polypeptide: ATP-dependent protease subunit HslV (173 aa).

Thr2 is an active-site residue. Gly158, Asp161, and Ser164 together coordinate Na(+).

The protein belongs to the peptidase T1B family. HslV subfamily. A double ring-shaped homohexamer of HslV is capped on each side by a ring-shaped HslU homohexamer. The assembly of the HslU/HslV complex is dependent on binding of ATP.

It is found in the cytoplasm. It carries out the reaction ATP-dependent cleavage of peptide bonds with broad specificity.. Allosterically activated by HslU binding. Its function is as follows. Protease subunit of a proteasome-like degradation complex believed to be a general protein degrading machinery. The chain is ATP-dependent protease subunit HslV from Mannheimia haemolytica (Pasteurella haemolytica).